The following is a 161-amino-acid chain: Urease accessory protein UreE (161 aa).

Positions 133-161 (EPEAGAYQSAPHSHSHAHDHPFVRLPAHS) are disordered.

The protein belongs to the UreE family.

The protein resides in the cytoplasm. In terms of biological role, involved in urease metallocenter assembly. Binds nickel. Probably functions as a nickel donor during metallocenter assembly. The protein is Urease accessory protein UreE of Pseudomonas putida (strain W619).